A 159-amino-acid polypeptide reads, in one-letter code: Cyclic pyranopterin monophosphate synthase (159 aa).

Residues 75 to 77 (LCH) and 113 to 114 (ME) contribute to the substrate site. D128 is a catalytic residue.

Belongs to the MoaC family. Homohexamer; trimer of dimers.

It carries out the reaction (8S)-3',8-cyclo-7,8-dihydroguanosine 5'-triphosphate = cyclic pyranopterin phosphate + diphosphate. It participates in cofactor biosynthesis; molybdopterin biosynthesis. Its function is as follows. Catalyzes the conversion of (8S)-3',8-cyclo-7,8-dihydroguanosine 5'-triphosphate to cyclic pyranopterin monophosphate (cPMP). This chain is Cyclic pyranopterin monophosphate synthase, found in Cupriavidus metallidurans (strain ATCC 43123 / DSM 2839 / NBRC 102507 / CH34) (Ralstonia metallidurans).